A 581-amino-acid chain; its full sequence is Proline--tRNA ligase (581 aa).

Belongs to the class-II aminoacyl-tRNA synthetase family. ProS type 1 subfamily. Homodimer.

It localises to the cytoplasm. It carries out the reaction tRNA(Pro) + L-proline + ATP = L-prolyl-tRNA(Pro) + AMP + diphosphate. Catalyzes the attachment of proline to tRNA(Pro) in a two-step reaction: proline is first activated by ATP to form Pro-AMP and then transferred to the acceptor end of tRNA(Pro). As ProRS can inadvertently accommodate and process non-cognate amino acids such as alanine and cysteine, to avoid such errors it has two additional distinct editing activities against alanine. One activity is designated as 'pretransfer' editing and involves the tRNA(Pro)-independent hydrolysis of activated Ala-AMP. The other activity is designated 'posttransfer' editing and involves deacylation of mischarged Ala-tRNA(Pro). The misacylated Cys-tRNA(Pro) is not edited by ProRS. The chain is Proline--tRNA ligase from Leptothrix cholodnii (strain ATCC 51168 / LMG 8142 / SP-6) (Leptothrix discophora (strain SP-6)).